The primary structure comprises 350 residues: MTEPAFFAPARRFEVGEIAALTGARLRDASQEKITISRLAPAAEGGEETLVFIDGRRHASRIGSVRAAALLCSEELAENAPDGVAVLVSPKPQQAFAMVARLLFPEANRPQPVTGETGVSPRAVIAEGAVVEDGAIIEAGAVIGVGASVGRGTIVGPNTVIGARCSIGRDGYVGPNVMLQYAVIGDRVIIHPGAQIGQDGFGFLPGPNGFEKNPQIGRVIIQDDVEIGANTTIDRGALSDTIIGEGTKIDNLVQIGHNVHIGRRCVIAGLCGLSGSVKLGDYVMLGGQVGIADHITIGNRAQLAASSGVMDDVPEGERWAGVPAKPMRQAFREIAALRSLVQDMRKGSKG.

H257 (proton acceptor) is an active-site residue.

Belongs to the transferase hexapeptide repeat family. LpxD subfamily. Homotrimer.

The catalysed reaction is a UDP-3-O-[(3R)-3-hydroxyacyl]-alpha-D-glucosamine + a (3R)-hydroxyacyl-[ACP] = a UDP-2-N,3-O-bis[(3R)-3-hydroxyacyl]-alpha-D-glucosamine + holo-[ACP] + H(+). The protein operates within bacterial outer membrane biogenesis; LPS lipid A biosynthesis. In terms of biological role, catalyzes the N-acylation of UDP-3-O-acylglucosamine using 3-hydroxyacyl-ACP as the acyl donor. Is involved in the biosynthesis of lipid A, a phosphorylated glycolipid that anchors the lipopolysaccharide to the outer membrane of the cell. This Chelativorans sp. (strain BNC1) protein is UDP-3-O-acylglucosamine N-acyltransferase.